The following is a 721-amino-acid chain: Ribosomal RNA large subunit methyltransferase K/L (721 aa).

The region spanning 56 to 167 (GMYKACLWSR…REVVTVSIDL (112 aa)) is the THUMP domain.

The protein belongs to the methyltransferase superfamily. RlmKL family.

It localises to the cytoplasm. It catalyses the reaction guanosine(2445) in 23S rRNA + S-adenosyl-L-methionine = N(2)-methylguanosine(2445) in 23S rRNA + S-adenosyl-L-homocysteine + H(+). It carries out the reaction guanosine(2069) in 23S rRNA + S-adenosyl-L-methionine = N(2)-methylguanosine(2069) in 23S rRNA + S-adenosyl-L-homocysteine + H(+). Specifically methylates the guanine in position 2445 (m2G2445) and the guanine in position 2069 (m7G2069) of 23S rRNA. This Marinomonas sp. (strain MWYL1) protein is Ribosomal RNA large subunit methyltransferase K/L.